A 251-amino-acid polypeptide reads, in one-letter code: Orotidine 5'-phosphate decarboxylase (251 aa).

Substrate-binding positions include Asp19, Lys42, 69 to 78, Thr133, Arg194, Gln204, Gly224, and Arg225; that span reads DLKFHDIPNT. Lys71 (proton donor) is an active-site residue.

The protein belongs to the OMP decarboxylase family. Type 1 subfamily. Homodimer.

The catalysed reaction is orotidine 5'-phosphate + H(+) = UMP + CO2. It participates in pyrimidine metabolism; UMP biosynthesis via de novo pathway; UMP from orotate: step 2/2. Its function is as follows. Catalyzes the decarboxylation of orotidine 5'-monophosphate (OMP) to uridine 5'-monophosphate (UMP). The protein is Orotidine 5'-phosphate decarboxylase of Syntrophus aciditrophicus (strain SB).